The following is a 243-amino-acid chain: Tryptophan synthase alpha chain (243 aa).

Active-site proton acceptor residues include E32 and D43.

It belongs to the TrpA family. As to quaternary structure, tetramer of two alpha and two beta chains.

It is found in the plastid. Its subcellular location is the chloroplast. The catalysed reaction is (1S,2R)-1-C-(indol-3-yl)glycerol 3-phosphate + L-serine = D-glyceraldehyde 3-phosphate + L-tryptophan + H2O. It functions in the pathway amino-acid biosynthesis; L-tryptophan biosynthesis; L-tryptophan from chorismate: step 5/5. Functionally, the alpha subunit is responsible for the aldol cleavage of indoleglycerol phosphate to indole and glyceraldehyde 3-phosphate. The sequence is that of Tryptophan synthase alpha chain from Cyanidioschyzon merolae (strain NIES-3377 / 10D) (Unicellular red alga).